Reading from the N-terminus, the 118-residue chain is Large ribosomal subunit protein uL18 (118 aa).

Belongs to the universal ribosomal protein uL18 family. In terms of assembly, part of the 50S ribosomal subunit; part of the 5S rRNA/L5/L18/L25 subcomplex. Contacts the 5S and 23S rRNAs.

Its function is as follows. This is one of the proteins that bind and probably mediate the attachment of the 5S RNA into the large ribosomal subunit, where it forms part of the central protuberance. This is Large ribosomal subunit protein uL18 from Rickettsia akari (strain Hartford).